Consider the following 491-residue polypeptide: Glutamyl-tRNA(Gln) amidotransferase subunit A (491 aa).

Catalysis depends on charge relay system residues Lys77 and Ser152. Ser176 functions as the Acyl-ester intermediate in the catalytic mechanism.

Belongs to the amidase family. GatA subfamily. As to quaternary structure, heterotrimer of A, B and C subunits.

The catalysed reaction is L-glutamyl-tRNA(Gln) + L-glutamine + ATP + H2O = L-glutaminyl-tRNA(Gln) + L-glutamate + ADP + phosphate + H(+). In terms of biological role, allows the formation of correctly charged Gln-tRNA(Gln) through the transamidation of misacylated Glu-tRNA(Gln) in organisms which lack glutaminyl-tRNA synthetase. The reaction takes place in the presence of glutamine and ATP through an activated gamma-phospho-Glu-tRNA(Gln). This is Glutamyl-tRNA(Gln) amidotransferase subunit A from Chlamydia trachomatis serovar A (strain ATCC VR-571B / DSM 19440 / HAR-13).